The chain runs to 28 residues: Palustrin-1a (28 aa).

Cysteine 22 and cysteine 28 form a disulfide bridge.

As to expression, expressed by the skin glands.

Its subcellular location is the secreted. Antimicrobial activity against Gram-negative bacterium E.coli. This chain is Palustrin-1a, found in Lithobates palustris (Pickerel frog).